We begin with the raw amino-acid sequence, 241 residues long: Endodeoxyribonuclease NucC (241 aa).

Active-site residues include D73, E104, and K106. Residues D73 and E104 each contribute to the Mg(2+) site.

The protein belongs to the NucC endonuclease family. Self-oligomerizes. Forms homotrimers; in the presence of cAAA the trimers associate face-to-face to form homohexamers. The 2 cAAA-binding sites are on the exterior of the hexamer at the three-way junction, there are maximally 2 cyclic nucleotides per hexamer. Mg(2+) is required as a cofactor.

With respect to regulation, activated by cAAA and to a lesser extent cAA and cAAG; cAAA and cAA are products of its cognate CD-NTase. Cyclic nucleotide binding causes hexamerization. Cyclic nucleotide binding causes a series of shifts that enclose the cAAA molecule, enable hexamer formation and juxtapose pairs of active sites to allow dsDNA cleavage. Functionally, effector DNase of a CBASS antivirus system. CBASS (cyclic oligonucleotide-based antiphage signaling system) provides immunity against bacteriophage. The CD-NTase protein synthesizes cyclic nucleotides in response to infection; these serve as specific second messenger signals. The signals activate a diverse range of effectors, leading to bacterial cell death and thus abortive phage infection. A type III-C(AAA) CBASS system. In terms of biological role, a cyclic nucleotide-activated dsDNase. In the presence of 3',3',3'-cyclic AMP-AMP-AMP (cAAA), and to a lesser extent 3',3',3'-cyclic AMP-AMP-GMP (cAAG) and cyclic-di-AMP (c-di-AMP), endonucleolytically degrades dsDNA. Binds one cAAA in a pocket on one surface of the trimer; cAAA binding promotes hexamerization, which is necessary for nuclease activation. Also binds c-diAMP or linear di-AMP with lower affinity. The nuclease digests dsDNA to about 50 bp lengths with a 2-base 3' overhang and a consensus recognition site of 5'-Axx|T-3'. DNA has been modeled to contact a pair of juxtaposed active sites (one from each layer of the hexamer), accounting for cleavage on both strands and the 2-base overhang. Protects E.coli strain JP313 against bacteriophage lambda cI- infection. When the cdnC-cap7-cap6-nucC operon is transformed into a susceptible strain it confers bacteriophage immunity. Mutations in the sensor (Cap7 also called HORMA) or effector proteins (CdnC, NucC) but not the disassembly protein (Cap6 also called Trip13) no longer confer immunity. The presence of the intact operon leads to culture collapse and cell death which occurs before the phage has finished its replication cycle, thus protecting non-infected bacteria by aborting the phage infection and preventing its propagation. The sequence is that of Endodeoxyribonuclease NucC from Escherichia coli (strain MS 115-1).